A 283-amino-acid polypeptide reads, in one-letter code: Pantothenate synthetase (283 aa).

Residue 30–37 coordinates ATP; it reads MGALHEGH. The active-site Proton donor is histidine 37. (R)-pantoate is bound at residue glutamine 61. Position 61 (glutamine 61) interacts with beta-alanine. An ATP-binding site is contributed by 150–153; it reads GRKD. Glutamine 156 is a binding site for (R)-pantoate. ATP is bound by residues valine 179 and 187–190; that span reads MSSR.

Belongs to the pantothenate synthetase family. As to quaternary structure, homodimer.

It localises to the cytoplasm. It catalyses the reaction (R)-pantoate + beta-alanine + ATP = (R)-pantothenate + AMP + diphosphate + H(+). Its pathway is cofactor biosynthesis; (R)-pantothenate biosynthesis; (R)-pantothenate from (R)-pantoate and beta-alanine: step 1/1. Catalyzes the condensation of pantoate with beta-alanine in an ATP-dependent reaction via a pantoyl-adenylate intermediate. This Rhodopirellula baltica (strain DSM 10527 / NCIMB 13988 / SH1) protein is Pantothenate synthetase.